The chain runs to 123 residues: MNAKIIALLIIGGGLGALTRYYISGVLPVYKDFPIGTLIVNSLASFLLGYIYGLLFSGFDISPEWRIFLGTGFCGGLSTFSTFSYETFSLLREGEIWLAFANITTNILVTIFLVFLGFILARR.

4 helical membrane passes run 5 to 25 (IIAL…YISG), 35 to 55 (IGTL…YGLL), 67 to 87 (IFLG…SYET), and 100 to 120 (FANI…GFIL). Na(+)-binding residues include Gly-75 and Ser-78.

The protein belongs to the fluoride channel Fluc/FEX (TC 1.A.43) family.

It is found in the cell membrane. The enzyme catalyses fluoride(in) = fluoride(out). Na(+) is not transported, but it plays an essential structural role and its presence is essential for fluoride channel function. In terms of biological role, fluoride-specific ion channel. Important for reducing fluoride concentration in the cell, thus reducing its toxicity. The chain is Fluoride-specific ion channel FluC from Pyrococcus horikoshii (strain ATCC 700860 / DSM 12428 / JCM 9974 / NBRC 100139 / OT-3).